The following is a 1624-amino-acid chain: Latent-transforming growth factor beta-binding protein 4 (1624 aa).

A signal peptide spans 1–27; that stretch reads MPRPGTSGRRPLLLVLLLPLFAAATSA. The disordered stretch occupies residues 125–146; sequence RRPRGPGGRGLLRRRPPQRAPA. One can recognise an EGF-like 1 domain in the interval 149–181; it reads APVLCPLICHNGGVCVKPDRCLCPPDFAGKFCQ. 6 disulfides stabilise this stretch: Cys-153/Cys-163, Cys-157/Cys-169, Cys-171/Cys-180, Cys-289/Cys-311, Cys-298/Cys-324, and Cys-312/Cys-327. Positions 287–339 constitute a TB 1 domain; that stretch reads GYCFRELRGGECASPLPGLRTQEVCCRGAGLAWGVHDCQLCSERLGNSERVSA. The N-linked (GlcNAc...) asparagine glycan is linked to Asn-352. Residues 357–397 form the EGF-like 2; calcium-binding domain; the sequence is DVDECATGGRCQHGECANTRGGYTCVCPDGFLLDSSRSSCI. 7 disulfide bridges follow: Cys-361–Cys-372, Cys-367–Cys-381, Cys-383–Cys-396, Cys-409–Cys-431, Cys-418–Cys-444, Cys-432–Cys-447, and Cys-433–Cys-459. In terms of domain architecture, TB 2 spans 407 to 459; sequence GPCFRVLRDGGCSLPILRNITKQICCCSRVGKAWGRGCQLCPPFGSEGFREIC. N-linked (GlcNAc...) asparagine glycosylation is present at Asn-425. Residues 474-546 form a disordered region; sequence YNTRPLGQEP…PEIPESGPSS (73 aa). Positions 487 to 500 are enriched in polar residues; that stretch reads SLSQPRTLPATSRP. Basic and acidic residues predominate over residues 508–522; that stretch reads HRLEPRPEPRPDPRP. An EGF-like 3 domain is found at 545-586; it reads SSGMCQRNPQVCGPGRCISRPSGYTCACDSGFRLSPQGTRCI. Intrachain disulfides connect Cys-549/Cys-561, Cys-556/Cys-570, Cys-572/Cys-585, Cys-591/Cys-603, Cys-598/Cys-612, Cys-614/Cys-627, Cys-633/Cys-645, Cys-640/Cys-654, Cys-656/Cys-669, Cys-675/Cys-687, Cys-682/Cys-696, Cys-698/Cys-707, Cys-714/Cys-726, Cys-721/Cys-735, Cys-737/Cys-750, Cys-756/Cys-768, Cys-763/Cys-777, Cys-779/Cys-792, Cys-838/Cys-851, Cys-845/Cys-860, Cys-862/Cys-876, Cys-882/Cys-894, Cys-888/Cys-903, Cys-905/Cys-918, Cys-924/Cys-935, Cys-930/Cys-944, Cys-946/Cys-959, Cys-1053/Cys-1065, Cys-1059/Cys-1074, and Cys-1076/Cys-1089. Positions 587–628 constitute an EGF-like 4; calcium-binding domain; sequence DVDECRRVPPPCAPGRCENSPGSFRCVCGPGFRAGPRAAECL. The 42-residue stretch at 629–670 folds into the EGF-like 5; calcium-binding domain; the sequence is DVDECHRVPPPCDLGRCENTPGSFLCVCPAGYQAAPHGASCQ. The region spanning 671–708 is the EGF-like 6; calcium-binding domain; sequence DVDECTQSPGLCGRGACKNLPGSFRCVCPAGFRGSACE. Residues 710-751 form the EGF-like 7; calcium-binding domain; the sequence is DVDECAQEPPPCGPGRCDNTAGSFHCACPAGFRSRGPGAPCQ. An EGF-like 8; calcium-binding domain is found at 752-793; that stretch reads DVDECARSPPPCTYGRCENTEGSFQCVCPMGFQPNTAGSECE. An EGF-like 9; calcium-binding domain is found at 834-877; sequence DVDECSSGAPPCGPHGHCTNTEGSFRCSCAPGYRAPSGRPGPCA. The EGF-like 10; calcium-binding domain maps to 878–919; the sequence is DVNECLEGDFCFPHGECLNTDGSFACTCAPGYRPGPRGASCL. The EGF-like 11; calcium-binding domain maps to 920–960; it reads DVDECSEEDLCQSGICTNTDGSFECICPPGHRAGPDLASCL. Residues 1049–1090 enclose the EGF-like 12; calcium-binding domain; it reads DVDECRNRSFCGAHAVCQNLPGSFQCLCDQGYEGARDGRHCV. Asn-1055 carries N-linked (GlcNAc...) asparagine glycosylation. The segment at 1130–1179 is disordered; the sequence is GRCVPPRTSAGTFPGSQPQAPASPVLPARPPPPPLPRRPSTPRQGPVGSG. The segment covering 1138 to 1149 has biased composition (polar residues); it reads SAGTFPGSQPQA. Residues 1156-1168 are compositionally biased toward pro residues; that stretch reads PARPPPPPLPRRP. The TB 3 domain occupies 1181 to 1235; it reads RECYFDTAAPDACDNILARNVTWQECCCTVGEGWGSGCRIQQCPGTETAEYQSLC. 10 cysteine pairs are disulfide-bonded: Cys-1183–Cys-1206, Cys-1193–Cys-1218, Cys-1207–Cys-1223, Cys-1208–Cys-1235, Cys-1257–Cys-1270, Cys-1265–Cys-1279, Cys-1281–Cys-1294, Cys-1300–Cys-1312, Cys-1307–Cys-1321, and Cys-1323–Cys-1336. N-linked (GlcNAc...) asparagine glycosylation occurs at Asn-1200. One can recognise an EGF-like 13; calcium-binding domain in the interval 1253–1295; sequence DVDECQLFRDQVCKSGVCVNTAPGYSCYCSNGYYYHTQRLECI. The EGF-like 14; calcium-binding domain maps to 1296 to 1337; sequence DNDECADEEPACEGGRCVNTVGSYHCTCEPPLVLDGSQRRCV. A glycan (N-linked (GlcNAc...) asparagine) is linked at Asn-1339. Residues 1349–1402 enclose the TB 4 domain; it reads GVCWQEVGADLVCSHPRLDRQATYTECCCLYGEAWGMDCALCPAQDSDDFEALC. Cystine bridges form between Cys-1351–Cys-1375, Cys-1361–Cys-1387, Cys-1376–Cys-1390, and Cys-1377–Cys-1402. Residues 1446 to 1458 are compositionally biased toward pro residues; sequence ALPYDPYPPPPGP. Residues 1446–1524 are disordered; that stretch reads ALPYDPYPPP…PPEGGSYAGS (79 aa). Residues 1501–1510 show a composition bias toward basic and acidic residues; the sequence is RSRDTRRSFP. EGF-like domains are found at residues 1533–1573 and 1574–1618; these read EAEE…MACV and DINE…HHCA. Intrachain disulfides connect Cys-1537-Cys-1548, Cys-1543-Cys-1557, Cys-1559-Cys-1572, Cys-1578-Cys-1593, Cys-1588-Cys-1602, and Cys-1604-Cys-1617.

It belongs to the LTBP family. In terms of assembly, forms part of the large latent transforming growth factor beta precursor complex; removal is essential for activation of complex. Interacts with LTBP1 and TGFB1. Interacts with EFEMP2; this interaction promotes fibrillar deposition of EFEMP2. In terms of processing, contains hydroxylated asparagine residues. In terms of tissue distribution, highly expressed in heart, skeletal muscle, pancreas, uterus, and small intestine. Weakly expressed in placenta and lung.

It is found in the secreted. The protein localises to the extracellular space. It localises to the extracellular matrix. Key regulator of transforming growth factor beta (TGFB1, TGFB2 and TGFB3) that controls TGF-beta activation by maintaining it in a latent state during storage in extracellular space. Associates specifically via disulfide bonds with the Latency-associated peptide (LAP), which is the regulatory chain of TGF-beta, and regulates integrin-dependent activation of TGF-beta. The polypeptide is Latent-transforming growth factor beta-binding protein 4 (LTBP4) (Homo sapiens (Human)).